A 274-amino-acid polypeptide reads, in one-letter code: NH(3)-dependent NAD(+) synthetase (274 aa).

46–53 (GISGGQDS) provides a ligand contact to ATP. D52 contacts Mg(2+). R140 contributes to the deamido-NAD(+) binding site. ATP is bound at residue T160. E165 lines the Mg(2+) pocket. The deamido-NAD(+) site is built by K173 and D180. ATP-binding residues include K189 and T211. 260–261 (HK) lines the deamido-NAD(+) pocket.

This sequence belongs to the NAD synthetase family. In terms of assembly, homodimer.

It catalyses the reaction deamido-NAD(+) + NH4(+) + ATP = AMP + diphosphate + NAD(+) + H(+). It functions in the pathway cofactor biosynthesis; NAD(+) biosynthesis; NAD(+) from deamido-NAD(+) (ammonia route): step 1/1. Catalyzes the ATP-dependent amidation of deamido-NAD to form NAD. Uses ammonia as a nitrogen source. The chain is NH(3)-dependent NAD(+) synthetase from Sodalis glossinidius (strain morsitans).